The following is a 79-amino-acid chain: uncharacterized protein (79 aa).

The segment at 1–27 (MRQRGQEHLPTSVKSEPRACNNPTVAE) is disordered.

This is an uncharacterized protein from Homo sapiens (Human).